The primary structure comprises 447 residues: Argininosuccinate synthase (447 aa).

ATP-binding positions include 17–25 (AFSGGLDTS) and alanine 43. Tyrosine 99 contacts L-citrulline. Residues glycine 129 and threonine 131 each coordinate ATP. L-aspartate contacts are provided by threonine 131, asparagine 135, and aspartate 136. Asparagine 135 lines the L-citrulline pocket. Residue aspartate 136 participates in ATP binding. L-citrulline-binding residues include arginine 139 and serine 192. ATP is bound at residue aspartate 194. L-citrulline is bound by residues threonine 201, glutamate 203, and glutamate 280.

The protein belongs to the argininosuccinate synthase family. Type 2 subfamily. As to quaternary structure, homotetramer.

The protein resides in the cytoplasm. The enzyme catalyses L-citrulline + L-aspartate + ATP = 2-(N(omega)-L-arginino)succinate + AMP + diphosphate + H(+). It functions in the pathway amino-acid biosynthesis; L-arginine biosynthesis; L-arginine from L-ornithine and carbamoyl phosphate: step 2/3. The protein is Argininosuccinate synthase of Escherichia fergusonii (strain ATCC 35469 / DSM 13698 / CCUG 18766 / IAM 14443 / JCM 21226 / LMG 7866 / NBRC 102419 / NCTC 12128 / CDC 0568-73).